The chain runs to 453 residues: Ribosomal protein uS12 methylthiotransferase RimO (453 aa).

The region spanning 5-120 (PKVGFVSLGC…VMQAVHSHLP (116 aa)) is the MTTase N-terminal domain. Residues cysteine 14, cysteine 50, cysteine 79, cysteine 151, cysteine 155, and cysteine 158 each coordinate [4Fe-4S] cluster. A Radical SAM core domain is found at 137-382 (LTPRHYAYLK…MEVAEEVSAN (246 aa)). Positions 385–453 (QRKVGKTLKV…ADGHDLWGEV (69 aa)) constitute a TRAM domain.

The protein belongs to the methylthiotransferase family. RimO subfamily. [4Fe-4S] cluster is required as a cofactor.

The protein localises to the cytoplasm. The enzyme catalyses L-aspartate(89)-[ribosomal protein uS12]-hydrogen + (sulfur carrier)-SH + AH2 + 2 S-adenosyl-L-methionine = 3-methylsulfanyl-L-aspartate(89)-[ribosomal protein uS12]-hydrogen + (sulfur carrier)-H + 5'-deoxyadenosine + L-methionine + A + S-adenosyl-L-homocysteine + 2 H(+). Its function is as follows. Catalyzes the methylthiolation of an aspartic acid residue of ribosomal protein uS12. In Burkholderia lata (strain ATCC 17760 / DSM 23089 / LMG 22485 / NCIMB 9086 / R18194 / 383), this protein is Ribosomal protein uS12 methylthiotransferase RimO.